The following is a 181-amino-acid chain: Oligoribonuclease (181 aa).

Residues 8-171 enclose the Exonuclease domain; that stretch reads LIWIDLEMTG…DDIRESVAEL (164 aa). The active site involves tyrosine 129.

Belongs to the oligoribonuclease family.

The protein localises to the cytoplasm. In terms of biological role, 3'-to-5' exoribonuclease specific for small oligoribonucleotides. This is Oligoribonuclease from Yersinia enterocolitica serotype O:8 / biotype 1B (strain NCTC 13174 / 8081).